The primary structure comprises 233 residues: Small ribosomal subunit protein eS4 (233 aa).

The S4 RNA-binding domain occupies Val37–Asp99.

It belongs to the eukaryotic ribosomal protein eS4 family.

This Halobacterium salinarum (strain ATCC 29341 / DSM 671 / R1) protein is Small ribosomal subunit protein eS4.